Reading from the N-terminus, the 156-residue chain is 6,7-dimethyl-8-ribityllumazine synthase (156 aa).

5-amino-6-(D-ribitylamino)uracil contacts are provided by residues Phe-23, 57–59 (AYE), and 81–83 (AII). 86–87 (GT) serves as a coordination point for (2S)-2-hydroxy-3-oxobutyl phosphate. His-89 (proton donor) is an active-site residue. Phe-114 provides a ligand contact to 5-amino-6-(D-ribitylamino)uracil. Arg-128 contributes to the (2S)-2-hydroxy-3-oxobutyl phosphate binding site.

This sequence belongs to the DMRL synthase family.

The enzyme catalyses (2S)-2-hydroxy-3-oxobutyl phosphate + 5-amino-6-(D-ribitylamino)uracil = 6,7-dimethyl-8-(1-D-ribityl)lumazine + phosphate + 2 H2O + H(+). Its pathway is cofactor biosynthesis; riboflavin biosynthesis; riboflavin from 2-hydroxy-3-oxobutyl phosphate and 5-amino-6-(D-ribitylamino)uracil: step 1/2. Catalyzes the formation of 6,7-dimethyl-8-ribityllumazine by condensation of 5-amino-6-(D-ribitylamino)uracil with 3,4-dihydroxy-2-butanone 4-phosphate. This is the penultimate step in the biosynthesis of riboflavin. The protein is 6,7-dimethyl-8-ribityllumazine synthase of Helicobacter acinonychis (strain Sheeba).